The sequence spans 450 residues: Tubulin alpha-6 chain (450 aa).

Residues Gln-11, Glu-71, Gly-144, Thr-145, Thr-179, Asn-206, and Asn-228 each coordinate GTP. Glu-71 provides a ligand contact to Mg(2+). Glu-254 is an active-site residue.

The protein belongs to the tubulin family. In terms of assembly, dimer of alpha and beta chains. A typical microtubule is a hollow water-filled tube with an outer diameter of 25 nm and an inner diameter of 15 nM. Alpha-beta heterodimers associate head-to-tail to form protofilaments running lengthwise along the microtubule wall with the beta-tubulin subunit facing the microtubule plus end conferring a structural polarity. Microtubules usually have 13 protofilaments but different protofilament numbers can be found in some organisms and specialized cells. Requires Mg(2+) as cofactor. Undergoes a tyrosination/detyrosination cycle, the cyclic removal and re-addition of a C-terminal tyrosine residue by the enzymes tubulin tyrosine carboxypeptidase (TTCP) and tubulin tyrosine ligase (TTL), respectively.

The protein localises to the cytoplasm. The protein resides in the cytoskeleton. It carries out the reaction GTP + H2O = GDP + phosphate + H(+). Functionally, tubulin is the major constituent of microtubules, a cylinder consisting of laterally associated linear protofilaments composed of alpha- and beta-tubulin heterodimers. Microtubules grow by the addition of GTP-tubulin dimers to the microtubule end, where a stabilizing cap forms. Below the cap, tubulin dimers are in GDP-bound state, owing to GTPase activity of alpha-tubulin. The protein is Tubulin alpha-6 chain (TUBA6) of Zea mays (Maize).